A 1481-amino-acid chain; its full sequence is Cystic fibrosis transmembrane conductance regulator (1481 aa).

Topologically, residues 1-77 (MQRSPLEKAS…KLINALRRCF (77 aa)) are cytoplasmic. Residues 78-98 (FWRFTFYGILLYLGEVTKAVQ) form a helical membrane-spanning segment. Residues 81-365 (FTFYGILLYL…WAVQTWYDSL (285 aa)) enclose the ABC transmembrane type-1 1 domain. Over 99-122 (PLLLGRIIASYDPDNKTERSIAIY) the chain is Extracellular. Residues 123–146 (LGIGLCLLFIVRTLLLHPAIFGLH) form a helical membrane-spanning segment. At 147 to 195 (HIGMQMRIAMFSLIYKKTLKLSSRVLDKISIGQLVSLLSNNLNKFDEGL) the chain is on the cytoplasmic side. The chain crosses the membrane as a helical span at residues 196–216 (ALAHFVWIAPLQVALLMGLIW). At 217–222 (ELLQAS) the chain is on the extracellular side. Residues 223–243 (AFCGLGFLIVLALFQAGLGRM) traverse the membrane as a helical segment. Residues 244 to 298 (MMKYRDQRAGKINERLVITSEMIENIQSVKAYCWEEAMEKIIENLRQTELKLTRK) lie on the Cytoplasmic side of the membrane. The chain crosses the membrane as a helical span at residues 299–319 (AAYVRYFNSSAFFFSGFFVVF). The Extracellular portion of the chain corresponds to 320–339 (LSVLPYALIKGIVLRKIFTT). The chain crosses the membrane as a helical span at residues 340 to 358 (ISFCIVLRMAVTRQFPWAV). The Cytoplasmic portion of the chain corresponds to 359 to 858 (QTWYDSLGAI…YLRYITLHKS (500 aa)). ATP contacts are provided by residues tryptophan 401, serine 434, 458-465 (GSTGAGKT), and glutamine 493. An ABC transporter 1 domain is found at 423–646 (NGDDNLFFSN…RPDFSSKLMG (224 aa)). Cysteine 524 carries the S-palmitoyl cysteine lipid modification. A phosphoserine mark is found at serine 549 and serine 660. Residues 654–831 (SSERRNSILT…EEINEEDLKE (178 aa)) form a disordered R region region. Serine 670 carries the post-translational modification Phosphoserine; by PKA. At serine 686 the chain carries Phosphoserine. Residue lysine 688 forms a Glycyl lysine isopeptide (Lys-Gly) (interchain with G-Cter in ubiquitin) linkage. 2 positions are modified to phosphoserine: serine 700 and serine 712. Position 717 is a phosphothreonine (threonine 717). 6 positions are modified to phosphoserine: serine 737, serine 753, serine 768, serine 790, serine 795, and serine 813. The chain crosses the membrane as a helical span at residues 859 to 879 (LIFVLIWCLVIFLAEVAASLV). The ABC transmembrane type-1 2 domain occupies 859–1155 (LIFVLIWCLV…AVNSSIDVDS (297 aa)). The Extracellular segment spans residues 880 to 918 (VLWLLGNTPFQDKGNSTYSRNNSYAVIITNTSSYYVFYI). Asparagine 894, asparagine 900, and asparagine 909 each carry an N-linked (GlcNAc...) asparagine glycan. The chain crosses the membrane as a discontinuously helical span at residues 919–939 (YVGVADTLLALGFFRGLPLVH). The Cytoplasmic portion of the chain corresponds to 940–990 (TLITVSKMLHHKMLHSVLQAPMSTLNTLKAGGILNRFSKDIAILDDLLPLT). The chain crosses the membrane as a helical span at residues 991–1011 (IFDFIQLLLIVIGAIAVVSVL). The Extracellular segment spans residues 1012–1013 (QP). The chain crosses the membrane as a helical span at residues 1014–1034 (YIFLATVPVIAAFILLRAYFL). Residues 1035–1095 (QTSQQLKQLE…TANWFLYLST (61 aa)) lie on the Cytoplasmic side of the membrane. Residues 1096–1116 (LRWFQMRIEMIFVIFFIAVTF) form a helical membrane-spanning segment. The Extracellular segment spans residues 1117–1130 (ISILTTGEGEGTVG). A helical membrane pass occupies residues 1131–1151 (IILTLAMNIMSTLQWAVNSSI). Over 1152–1481 (DVDSLMRSVS…TEEEVQETRL (330 aa)) the chain is Cytoplasmic. The region spanning 1211–1444 (MTIKDLTAKY…KSLFRQAISH (234 aa)) is the ABC transporter 2 domain. ATP-binding positions include tyrosine 1220 and 1245 to 1252 (GRTGSGKS). Residues 1387 to 1481 (RALKQAFADC…TEEEVQETRL (95 aa)) are interaction with GORASP2. The S-palmitoyl cysteine moiety is linked to residue cysteine 1396. 2 positions are modified to phosphoserine: serine 1445 and serine 1457. The tract at residues 1453–1481 (HRNSSKYKSQPQIASLKEETEEEVQETRL) is disordered. Residues 1471-1481 (ETEEEVQETRL) show a composition bias toward acidic residues. Residues 1479–1481 (TRL) carry the PDZ-binding motif.

It belongs to the ABC transporter superfamily. ABCC family. CFTR transporter (TC 3.A.1.202) subfamily. As to quaternary structure, monomer; does not require oligomerization for channel activity. May form oligomers in the membrane. Interacts with SLC26A3, SLC26A6 and NHERF1. Interacts with SHANK2. Interacts with MYO6. Interacts (via C-terminus) with GOPC (via PDZ domain); this promotes CFTR internalization and thereby decreases channel activity. Interacts with SLC4A7 through NHERF1. Found in a complex with MYO5B and RAB11A. Interacts with ANO1. Interacts with SLC26A8. Interacts with AHCYL1; the interaction increases CFTR activity. Interacts with CSE1L. The core-glycosylated form interacts with GORASP2 (via PDZ GRASP-type 1 domain) in respone to ER stress. Interacts with MARCHF2; the interaction leads to CFTR ubiqtuitination and degradation. Interacts with ADGRG2. N-glycosylated. In terms of processing, phosphorylated; cAMP treatment promotes phosphorylation and activates the channel. Dephosphorylation decreases the ATPase activity (in vitro). Phosphorylation at PKA sites activates the channel. Phosphorylation at PKC sites enhances the response to phosphorylation by PKA. Phosphorylated by AMPK; this inhibits channel activity. Post-translationally, ubiquitinated, leading to its degradation in the lysosome. Deubiquitination by USP10 in early endosomes enhances its endocytic recycling to the cell membrane. Ubiquitinated by RNF185 during ER stress. Ubiquitinated by MARCHF2.

Its subcellular location is the apical cell membrane. The protein localises to the early endosome membrane. It is found in the cell membrane. It localises to the recycling endosome membrane. The protein resides in the endoplasmic reticulum membrane. Its subcellular location is the nucleus. It carries out the reaction ATP + H2O + closed Cl(-) channel = ADP + phosphate + open Cl(-) channel.. The catalysed reaction is chloride(in) = chloride(out). The enzyme catalyses hydrogencarbonate(in) = hydrogencarbonate(out). It catalyses the reaction ATP + H2O = ADP + phosphate + H(+). Functionally, epithelial ion channel that plays an important role in the regulation of epithelial ion and water transport and fluid homeostasis. Mediates the transport of chloride ions across the cell membrane. Possesses an intrinsic ATPase activity and utilizes ATP to gate its channel; the passive flow of anions through the channel is gated by cycles of ATP binding and hydrolysis by the ATP-binding domains. The ion channel is also permeable to HCO(3)(-); selectivity depends on the extracellular chloride concentration. Exerts its function also by modulating the activity of other ion channels and transporters. Contributes to the regulation of the pH and the ion content of the epithelial fluid layer. Modulates the activity of the epithelial sodium channel (ENaC) complex, in part by regulating the cell surface expression of the ENaC complex. May regulate bicarbonate secretion and salvage in epithelial cells by regulating the transporter SLC4A7. Can inhibit the chloride channel activity of ANO1. Plays a role in the chloride and bicarbonate homeostasis during sperm epididymal maturation and capacitation. The sequence is that of Cystic fibrosis transmembrane conductance regulator from Aotus nancymaae (Ma's night monkey).